A 132-amino-acid chain; its full sequence is uncharacterized protein (132 aa).

A helical membrane pass occupies residues 10 to 30; sequence LVLFFTIILIALCPFVYYLWD. Residues 50 to 79 are a coiled coil; the sequence is KNCSTEIEHAIEEHKRKNKEKKEAKEKRLA.

The protein localises to the membrane. This is an uncharacterized protein from Invertebrate iridescent virus 6 (IIV-6).